We begin with the raw amino-acid sequence, 975 residues long: MSARLPFVLRRLARPQHPGSPRRLPSLCRASSGRGSGCGGGEGLLGQQRLRDTQAGSSRGPGSPAPPARDSIVREVIQNSKEVLSLLQEKTPTFKPVLAIIQAGDDNLMQEVNQNLAEEAGLNITHICLPAESGEDEIIDEILKINEDSRVHGLALQIAETSFSNKILNALKPEKDVDGLTDVNLGKLVRGDAHECFISPVARAVIELLEKSGVSLDGKKILVIGAHGSLEATLQCLFQRKGSMTMSSQWKTPQLQGKLQEADIVVLGSPKPEEIPLSWIQPGTTVFNCSHDFLSGKAACISSGVHGISPIAEDVSLLAAALRIQNMVSSGRRWLREQQHRRWRLHCLKLQPLSPVPSDIEISRAQTPKAVEILAKEIGLLADEIEIYGKSKAKVRLSLLERLKDQADGKYVLVAGITPTPLGEGKSTVTIGLVQALTAHLNVNSFACLRQPSQGPTFGVKGGAAGGGYAQVIPMEEFNLHLTGDIHAITAANNLLAAAIDARILHENTQTDKALYNRLVPSVNGVREFSKIQLARLKRLGINKTDPSALTEEEMRKFARLDIDPSTITWQRVVDTNDRFLRKITIGQANTEKGCSRQAQFDIAVASEIMAVLALTDSLSDMKERLGRMVVASDRNGQPVTADDLGVTGALTVLMKDAIKPNLMQTLEGTPVFVHAGPFANIAHGNSSVLADKIALKLVGEGGFVVTEAGFGADIGMEKFFNIKCRASGLVPSVVVLVATVRALKMHGGGPSVTAGVPLRKEYTEENLQLVADGCCNLEKQIQIAQLFGVPVVVALNVFKTDTRAEIDLVCELAKRAGAFNAVPCYHWSIGGKGSVDLAWAVREAASKESRFQFLYDVQLPIVEKIRTIAQSVYGAKDIELSPEAQSKIDRYTEQGFGNLPICMAKTHLSLSHQPDKKGVPKGFILPISDVRASIGAGFIYPLVGTMSTMPGLPTRPCFYDIDLDTETEQVKGLF.

Residues 1–30 (MSARLPFVLRRLARPQHPGSPRRLPSLCRA) constitute a mitochondrion transit peptide. Residues 13–45 (ARPQHPGSPRRLPSLCRASSGRGSGCGGGEGLL) are disordered. A methylenetetrahydrofolate dehydrogenase and cyclohydrolase region spans residues 31–345 (SSGRGSGCGG…REQQHRRWRL (315 aa)). Residues 34–44 (RGSGCGGGEGL) are compositionally biased toward gly residues. Lys-187 carries the post-translational modification N6-acetyllysine; alternate. At Lys-187 the chain carries N6-succinyllysine; alternate. Residues 346–975 (HCLKLQPLSP…TETEQVKGLF (630 aa)) are formyltetrahydrofolate synthetase. At Ser-354 the chain carries Phosphoserine. 420–427 (TPLGEGKS) is a binding site for ATP. An N6-succinyllysine modification is found at Lys-593.

In the N-terminal section; belongs to the tetrahydrofolate dehydrogenase/cyclohydrolase family. The protein in the C-terminal section; belongs to the formate--tetrahydrofolate ligase family. Homodimer.

The protein resides in the mitochondrion. The enzyme catalyses (6S)-5,6,7,8-tetrahydrofolate + formate + ATP = (6R)-10-formyltetrahydrofolate + ADP + phosphate. Its pathway is one-carbon metabolism; tetrahydrofolate interconversion. In terms of biological role, may provide the missing metabolic reaction required to link the mitochondria and the cytoplasm in the mammalian model of one-carbon folate metabolism complementing thus the enzymatic activities of MTHFD2. This chain is Monofunctional C1-tetrahydrofolate synthase, mitochondrial (MTHFD1L), found in Bos taurus (Bovine).